Consider the following 613-residue polypeptide: Tetratricopeptide repeat protein 39A (613 aa).

3 TPR repeats span residues 315 to 348 (AIFL…QQHW), 505 to 538 (CLVK…EKKI), and 546 to 579 (PNAL…YKNY).

It belongs to the TTC39 family.

The polypeptide is Tetratricopeptide repeat protein 39A (TTC39A) (Homo sapiens (Human)).